Here is a 273-residue protein sequence, read N- to C-terminus: NADPH-dependent 7-cyano-7-deazaguanine reductase (273 aa).

80–82 (VES) is a substrate binding site. Residue 82–83 (SK) participates in NADPH binding. Catalysis depends on Cys-180, which acts as the Thioimide intermediate. Catalysis depends on Asp-187, which acts as the Proton donor. 219–220 (HE) is a substrate binding site. 248–249 (RG) serves as a coordination point for NADPH.

The protein belongs to the GTP cyclohydrolase I family. QueF type 2 subfamily. Homodimer.

Its subcellular location is the cytoplasm. It catalyses the reaction 7-aminomethyl-7-carbaguanine + 2 NADP(+) = 7-cyano-7-deazaguanine + 2 NADPH + 3 H(+). Its pathway is tRNA modification; tRNA-queuosine biosynthesis. In terms of biological role, catalyzes the NADPH-dependent reduction of 7-cyano-7-deazaguanine (preQ0) to 7-aminomethyl-7-deazaguanine (preQ1). The chain is NADPH-dependent 7-cyano-7-deazaguanine reductase from Bordetella parapertussis (strain 12822 / ATCC BAA-587 / NCTC 13253).